The following is a 186-amino-acid chain: MRCYIMYKYMKEAWKNPDESYVKELMRERLPKWRRQPVIIRIDKPTRIDRARRLGYKAKTGYVVARIRVRRGSRRKSRFKNGRDPKRMGVNKISGEKSIQRMAEERVARKYPNLEVLNSYWVWEDGKAKYYEVILVDPQCPSIQHDNKINWICSKKHTRRAFRGLTSAGKKGRGLNKKGKGAEKVR.

Residues 163 to 186 (RGLTSAGKKGRGLNKKGKGAEKVR) form a disordered region. Residues 170-179 (KKGRGLNKKG) are compositionally biased toward basic residues.

It belongs to the eukaryotic ribosomal protein eL15 family.

In Methanosphaera stadtmanae (strain ATCC 43021 / DSM 3091 / JCM 11832 / MCB-3), this protein is Large ribosomal subunit protein eL15.